We begin with the raw amino-acid sequence, 181 residues long: Cytochrome P450 monooxygenase dtpC (181 aa).

C125 lines the heme pocket.

This sequence belongs to the cytochrome P450 family. Heme serves as cofactor.

It functions in the pathway alkaloid biosynthesis. The protein operates within secondary metabolite biosynthesis. Its function is as follows. Cytochrome P450 monooxygenase; part of the gene cluster that mediates the biosynthesis of the dimeric diketopiperazine alkaloid ditryptophenaline. The nonribosomal peptide synthase dtpA accepts L-tryptophan and L-phenylalanine as its substrates and forms the phenylalanyl-tryptophanyl cyclic dipeptide product cyclophenylalanyltryptophenyl. The N-methyltransferase dtpB is responsible for the N-methylation of cyclophenylalanyltryptophenyl to yield cyclo-N-methylphenylalanyltryptophenyl. The cytochrome P450 monooxygenase is responsible not only for pyrroloindole ring formation but also for concurrent dimerization of N-methylphenylalanyltryptophanyl diketopiperazine monomers into a homodimeric product. The chain is Cytochrome P450 monooxygenase dtpC from Aspergillus flavus (strain ATCC 200026 / FGSC A1120 / IAM 13836 / NRRL 3357 / JCM 12722 / SRRC 167).